We begin with the raw amino-acid sequence, 342 residues long: Isopentenyl-diphosphate delta-isomerase (342 aa).

12–13 (RK) is a substrate binding site. Residues 71-73 (AMT), Ser-101, and Asn-129 each bind FMN. Residue 101–103 (SQR) coordinates substrate. Gln-163 contributes to the substrate binding site. Glu-164 contributes to the Mg(2+) binding site. Residues Lys-195, Thr-225, 272-274 (GIR), and 293-294 (AR) each bind FMN.

Belongs to the IPP isomerase type 2 family. In terms of assembly, homooctamer. Dimer of tetramers. The cofactor is FMN. It depends on NADPH as a cofactor. Mg(2+) is required as a cofactor.

The protein resides in the cytoplasm. The catalysed reaction is isopentenyl diphosphate = dimethylallyl diphosphate. In terms of biological role, involved in the biosynthesis of isoprenoids. Catalyzes the 1,3-allylic rearrangement of the homoallylic substrate isopentenyl (IPP) to its allylic isomer, dimethylallyl diphosphate (DMAPP). This chain is Isopentenyl-diphosphate delta-isomerase, found in Mycolicibacterium gilvum (strain PYR-GCK) (Mycobacterium gilvum (strain PYR-GCK)).